The chain runs to 287 residues: ATP synthase gamma chain (287 aa).

The protein belongs to the ATPase gamma chain family. In terms of assembly, F-type ATPases have 2 components, CF(1) - the catalytic core - and CF(0) - the membrane proton channel. CF(1) has five subunits: alpha(3), beta(3), gamma(1), delta(1), epsilon(1). CF(0) has three main subunits: a, b and c.

It is found in the cell inner membrane. Functionally, produces ATP from ADP in the presence of a proton gradient across the membrane. The gamma chain is believed to be important in regulating ATPase activity and the flow of protons through the CF(0) complex. This chain is ATP synthase gamma chain, found in Colwellia psychrerythraea (strain 34H / ATCC BAA-681) (Vibrio psychroerythus).